We begin with the raw amino-acid sequence, 157 residues long: Holo-[acyl-carrier-protein] synthase (157 aa).

Mg(2+) contacts are provided by Asp8 and Glu59.

This sequence belongs to the P-Pant transferase superfamily. AcpS family. It depends on Mg(2+) as a cofactor.

The protein localises to the cytoplasm. The catalysed reaction is apo-[ACP] + CoA = holo-[ACP] + adenosine 3',5'-bisphosphate + H(+). Its function is as follows. Transfers the 4'-phosphopantetheine moiety from coenzyme A to a Ser of acyl-carrier-protein. This chain is Holo-[acyl-carrier-protein] synthase, found in Gluconobacter oxydans (strain 621H) (Gluconobacter suboxydans).